The chain runs to 532 residues: Invertase 2 (532 aa).

A signal peptide spans 1 to 19 (MLLQAFLFLLAGFAAKISA). Asn23 carries N-linked (GlcNAc...) asparagine glycosylation. Residues 39 to 42 (WMND) and Gln60 contribute to the substrate site. Residue Asp42 is part of the active site. An N-linked (GlcNAc...) asparagine; partial glycan is attached at Asn64. N-linked (GlcNAc...) asparagine glycosylation occurs at Asn97. A substrate-binding site is contributed by 102-103 (FS). Residues Asn111 and Asn118 are each glycosylated (N-linked (GlcNAc...) asparagine). Residue Asn165 is glycosylated (N-linked (GlcNAc...) asparagine; partial). Residues 170-171 (RD) and Glu223 each bind substrate. 2 N-linked (GlcNAc...) asparagine; partial glycosylation sites follow: Asn266 and Asn275. Position 311 (Trp311) interacts with substrate. N-linked (GlcNAc...) asparagine glycans are attached at residues Asn356, Asn369, Asn384, and Asn398. Residue Asn512 is glycosylated (N-linked (GlcNAc...) asparagine; partial).

It belongs to the glycosyl hydrolase 32 family. In terms of processing, isoform Secreted is glycosylated. Isoform Intracellular is not glycosylated.

It localises to the cytoplasm. Its subcellular location is the secreted. It carries out the reaction Hydrolysis of terminal non-reducing beta-D-fructofuranoside residues in beta-D-fructofuranosides.. This chain is Invertase 2 (SUC2), found in Saccharomyces cerevisiae (strain ATCC 204508 / S288c) (Baker's yeast).